We begin with the raw amino-acid sequence, 261 residues long: Cytochrome c oxidase subunit 3 (261 aa).

At 1–15 the chain is on the mitochondrial matrix side; it reads MTHQTHAYHMVNPSP. Residues 16–34 traverse the membrane as a helical segment; sequence WPLTGALSALLMTSGLTMW. Residues 35-40 are Mitochondrial intermembrane-facing; sequence FHFNSM. A helical transmembrane segment spans residues 41 to 66; sequence TLLTLGLTTNMLTMYQWWRDIIREST. Topologically, residues 67–72 are mitochondrial matrix; it reads FQGHHT. Residues 73–105 traverse the membrane as a helical segment; the sequence is PNVQKGLRYGMILFIISEVLFFTGFFWAFYHSS. The Mitochondrial intermembrane portion of the chain corresponds to 106–128; the sequence is LAPTPELGGCWPPTGIHPLNPLE. The chain crosses the membrane as a helical span at residues 129–152; it reads VPLLNTSVLLASGVSITWAHHSLM. Over 153 to 155 the chain is Mitochondrial matrix; it reads EGN. A helical membrane pass occupies residues 156 to 183; the sequence is RNHMLQALFITISLGVYFTLLQASEYYE. Residues 184 to 190 lie on the Mitochondrial intermembrane side of the membrane; it reads APFTISD. The helical transmembrane segment at 191–223 threads the bilayer; the sequence is GVYGSTFFVATGFHGLHVIIGSTFLIVCFFRQL. Residues 224–232 lie on the Mitochondrial matrix side of the membrane; sequence KFHFTSNHH. A helical transmembrane segment spans residues 233 to 256; sequence FGFEAAAWYWHFVDVVWLFLYVSI. Over 257 to 261 the chain is Mitochondrial intermembrane; the sequence is YWWGS.

Belongs to the cytochrome c oxidase subunit 3 family. Component of the cytochrome c oxidase (complex IV, CIV), a multisubunit enzyme composed of 14 subunits. The complex is composed of a catalytic core of 3 subunits MT-CO1, MT-CO2 and MT-CO3, encoded in the mitochondrial DNA, and 11 supernumerary subunits COX4I, COX5A, COX5B, COX6A, COX6B, COX6C, COX7A, COX7B, COX7C, COX8 and NDUFA4, which are encoded in the nuclear genome. The complex exists as a monomer or a dimer and forms supercomplexes (SCs) in the inner mitochondrial membrane with NADH-ubiquinone oxidoreductase (complex I, CI) and ubiquinol-cytochrome c oxidoreductase (cytochrome b-c1 complex, complex III, CIII), resulting in different assemblies (supercomplex SCI(1)III(2)IV(1) and megacomplex MCI(2)III(2)IV(2)).

The protein resides in the mitochondrion inner membrane. It catalyses the reaction 4 Fe(II)-[cytochrome c] + O2 + 8 H(+)(in) = 4 Fe(III)-[cytochrome c] + 2 H2O + 4 H(+)(out). In terms of biological role, component of the cytochrome c oxidase, the last enzyme in the mitochondrial electron transport chain which drives oxidative phosphorylation. The respiratory chain contains 3 multisubunit complexes succinate dehydrogenase (complex II, CII), ubiquinol-cytochrome c oxidoreductase (cytochrome b-c1 complex, complex III, CIII) and cytochrome c oxidase (complex IV, CIV), that cooperate to transfer electrons derived from NADH and succinate to molecular oxygen, creating an electrochemical gradient over the inner membrane that drives transmembrane transport and the ATP synthase. Cytochrome c oxidase is the component of the respiratory chain that catalyzes the reduction of oxygen to water. Electrons originating from reduced cytochrome c in the intermembrane space (IMS) are transferred via the dinuclear copper A center (CU(A)) of subunit 2 and heme A of subunit 1 to the active site in subunit 1, a binuclear center (BNC) formed by heme A3 and copper B (CU(B)). The BNC reduces molecular oxygen to 2 water molecules using 4 electrons from cytochrome c in the IMS and 4 protons from the mitochondrial matrix. The protein is Cytochrome c oxidase subunit 3 (MT-CO3) of Antidorcas marsupialis (Springbok).